A 363-amino-acid polypeptide reads, in one-letter code: Ethanol acetyltransferase 1 (363 aa).

Residues 1–19 (MLLAYTVRPSNWSFTRRAY) constitute a mitochondrion transit peptide. One can recognise an AB hydrolase-1 domain in the interval 65 to 164 (PIIFYHGLLG…FSAACIIDNS (100 aa)). Active-site charge relay system residues include Ser138, Asp162, and His313.

This sequence belongs to the AB hydrolase superfamily.

The protein localises to the mitochondrion. The enzyme catalyses ethanol + acetyl-CoA = ethyl acetate + CoA. The catalysed reaction is acetyl-CoA + H2O = acetate + CoA + H(+). It carries out the reaction ethyl acetate + H2O = ethanol + acetate + H(+). Functionally, alcohol acetyltransferase that catalyzes the synthesis of ethyl acetate from ethanol and acetyl-CoA. Can also function as a thioesterase by hydrolyzing acetyl-CoA in the absence of ethanol, as well as esterase hydrolyzing ethyl acetate. This Kluyveromyces marxianus (strain DMKU3-1042 / BCC 29191 / NBRC 104275) (Yeast) protein is Ethanol acetyltransferase 1 (EAT1).